The following is a 349-amino-acid chain: Flap endonuclease 1-B (349 aa).

An N-domain region spans residues 1 to 105 (MGIKGLTKLL…GELAKRLARR (105 aa)). Position 34 (aspartate 34) interacts with Mg(2+). Arginine 71 serves as a coordination point for DNA. Mg(2+) contacts are provided by aspartate 87, glutamate 159, glutamate 161, aspartate 180, and aspartate 182. The segment at 123–254 (DMEKYSKRTV…QTALKLIRQH (132 aa)) is I-domain. A DNA-binding site is contributed by glutamate 159. 2 residues coordinate DNA: glycine 232 and aspartate 234. Aspartate 234 serves as a coordination point for Mg(2+).

This sequence belongs to the XPG/RAD2 endonuclease family. FEN1 subfamily. In terms of assembly, interacts with PCNA. Three molecules of FEN1 bind to one PCNA trimer with each molecule binding to one PCNA monomer. PCNA stimulates the nuclease activity without altering cleavage specificity. The cofactor is Mg(2+). Phosphorylated. Phosphorylation upon DNA damage induces relocalization to the nuclear plasma.

The protein localises to the nucleus. Its subcellular location is the nucleolus. The protein resides in the nucleoplasm. It is found in the mitochondrion. Its function is as follows. Structure-specific nuclease with 5'-flap endonuclease and 5'-3' exonuclease activities involved in DNA replication and repair. During DNA replication, cleaves the 5'-overhanging flap structure that is generated by displacement synthesis when DNA polymerase encounters the 5'-end of a downstream Okazaki fragment. It enters the flap from the 5'-end and then tracks to cleave the flap base, leaving a nick for ligation. Also involved in the long patch base excision repair (LP-BER) pathway, by cleaving within the apurinic/apyrimidinic (AP) site-terminated flap. Acts as a genome stabilization factor that prevents flaps from equilibrating into structures that lead to duplications and deletions. Also possesses 5'-3' exonuclease activity on nicked or gapped double-stranded DNA, and exhibits RNase H activity. Also involved in replication and repair of rDNA and in repairing mitochondrial DNA. The polypeptide is Flap endonuclease 1-B (Physcomitrium patens (Spreading-leaved earth moss)).